The sequence spans 802 residues: Nuclear polyadenylated RNA-binding protein 3 (802 aa).

2 disordered regions span residues 1-174 and 252-293; these read MSDE…RRET and ALSV…RMRF. Residues 22-34 show a composition bias toward low complexity; it reads SNSNENELMNNSS. A compositionally biased stretch (acidic residues) spans 37–73; it reads DGIEFDAPEEEREAEREEENEEQHELEDVNDEEEEDK. At T86 the chain carries Phosphothreonine. Composition is skewed to acidic residues over residues 101–139 and 149–158; these read DDDD…EEGN and AAEDGEDEED. The segment covering 159-174 has biased composition (basic and acidic residues); that stretch reads KKDKTKDKEVELRRET. Residues 260–276 are compositionally biased toward low complexity; sequence STISTTASASATSGARS. The segment covering 277 to 293 has biased composition (basic and acidic residues); that stretch reads NDQRKPPLSDAQRRMRF. The 72-residue stretch at 330–401 folds into the RRM domain; the sequence is SRLFIGNLPL…KKLILEVSSS (72 aa). Position 451 is a phosphothreonine (T451). Disordered regions lie at residues 571–675 and 717–802; these read IYGA…PMDQ and MQGQ…KLQK. Residues 575 to 590 show a composition bias toward pro residues; sequence PPLPVPNGPAVGPPPQ. Residues 593 to 614 show a composition bias toward low complexity; the sequence is YYQGYSMPPPQQQQQQPYGNYG. Positions 632–642 are enriched in polar residues; that stretch reads MNQSYGRYQTS. 2 stretches are compositionally biased toward low complexity: residues 651–661 and 717–738; these read QIPQGYGRYQA and MQGQ…MNSS. Polar residues predominate over residues 745–754; the sequence is TNYNGQNISA. Over residues 757–769 the composition is skewed to pro residues; sequence SAPPMSHQPPPPQ. The segment covering 770 to 785 has biased composition (low complexity); the sequence is QQQQQQQQQQQQQQQP.

Its subcellular location is the nucleus. The protein resides in the nucleoplasm. In terms of biological role, may be required for packaging pre-mRNAs into ribonucleoprotein structures amenable to efficient nuclear RNA processing. Binds to poly(A)+ RNA. Appears to act in the maintenance of CLN3 mRNA levels. This is Nuclear polyadenylated RNA-binding protein 3 (NAB3) from Saccharomyces cerevisiae (strain ATCC 204508 / S288c) (Baker's yeast).